Reading from the N-terminus, the 463-residue chain is tRNA (guanine(10)-N(2))-methyltransferase TRMT11 (463 aa).

A2 carries the N-acetylalanine modification.

The protein belongs to the class I-like SAM-binding methyltransferase superfamily. TRM11 methyltransferase family. In terms of assembly, part of the heterodimeric TRMT11-TRM112 methyltransferase complex; this complex forms an active tRNA methyltransferase, where TRMT112 acts as an activator of the catalytic subunit TRMT11.

Its subcellular location is the cytoplasm. The enzyme catalyses guanosine(10) in tRNA + S-adenosyl-L-methionine = N(2)-methylguanosine(10) in tRNA + S-adenosyl-L-homocysteine + H(+). Catalytic subunit of the TRMT11-TRM112 methyltransferase complex, that specifically mediates the S-adenosyl-L-methionine-dependent N(2)-methylation of guanosine nucleotide at position 10 (m2G10) in tRNAs. This is one of the major tRNA (guanine-N(2))-methyltransferases. The sequence is that of tRNA (guanine(10)-N(2))-methyltransferase TRMT11 from Rattus norvegicus (Rat).